The following is a 239-amino-acid chain: Protein TrbH (239 aa).

The chain crosses the membrane as a helical span at residues 208–228; the sequence is TVVSIICLLMWICLVYIHCGI.

The protein localises to the cell inner membrane. The sequence is that of Protein TrbH (trbH) from Escherichia coli (strain K12).